The following is a 373-amino-acid chain: 3-dehydroquinate synthase (373 aa).

NAD(+) is bound by residues glutamate 67–lysine 72, glycine 101–aspartate 105, threonine 125–threonine 126, lysine 138, and lysine 147. Zn(2+) contacts are provided by glutamate 180, histidine 240, and histidine 256.

The protein belongs to the sugar phosphate cyclases superfamily. Dehydroquinate synthase family. Requires NAD(+) as cofactor. Co(2+) is required as a cofactor. It depends on Zn(2+) as a cofactor.

It is found in the cytoplasm. It carries out the reaction 7-phospho-2-dehydro-3-deoxy-D-arabino-heptonate = 3-dehydroquinate + phosphate. It functions in the pathway metabolic intermediate biosynthesis; chorismate biosynthesis; chorismate from D-erythrose 4-phosphate and phosphoenolpyruvate: step 2/7. Its function is as follows. Catalyzes the conversion of 3-deoxy-D-arabino-heptulosonate 7-phosphate (DAHP) to dehydroquinate (DHQ). In Chlamydia trachomatis serovar A (strain ATCC VR-571B / DSM 19440 / HAR-13), this protein is 3-dehydroquinate synthase.